The chain runs to 306 residues: Eukaryotic translation initiation factor 2 subunit alpha (306 aa).

The S1 motif domain maps to 17-88 (DELVVVNVRQ…EKGYIDLSKR (72 aa)). Ser-52 is subject to Phosphoserine. Phosphothreonine is present on Thr-179. Ser-273, Ser-295, Ser-303, and Ser-305 each carry phosphoserine.

It belongs to the eIF-2-alpha family. Eukaryotic translation initiation factor 2 eIF2 is a heterotrimeric complex composed of an alpha, a beta and a gamma subunit.

It localises to the cytoplasm. Its subcellular location is the cytosol. Functionally, eIF-2 functions in the early steps of protein synthesis by forming a ternary complex with GTP and initiator tRNA. This complex binds to a 40S ribosomal subunit, followed by mRNA binding to form a 43S pre-initiation complex. Junction of the 60S ribosomal subunit to form the 80S initiation complex is preceded by hydrolysis of the GTP bound to eIF-2 and release of an eIF-2-GDP binary complex. In order for eIF-2 to recycle and catalyze another round of initiation, the GDP bound to eIF-2 must exchange with GTP by way of a reaction catalyzed by eIF2B. This chain is Eukaryotic translation initiation factor 2 subunit alpha (tif211), found in Schizosaccharomyces pombe (strain 972 / ATCC 24843) (Fission yeast).